The primary structure comprises 154 residues: MSTSLAVVRLDPGLPLPSRAHDGDAGVDLYSVEDVKLAPGQRALVRTGLAVAIPFGMVGLIHPRSGLAVRVGLSIVNSPGTVDAGYRGEIKVALINLDPVEPLVVHRGDRIAQLLVQRVELVELVEVSSFDEAGLAETSRGDGGHGSSGGHASL.

Residues 64–66, asparagine 77, 81–83, and lysine 91 each bind substrate; these read RSG and TVD.

This sequence belongs to the dUTPase family. In terms of assembly, homotrimer. Mg(2+) is required as a cofactor.

It carries out the reaction dUTP + H2O = dUMP + diphosphate + H(+). Its pathway is pyrimidine metabolism; dUMP biosynthesis; dUMP from dCTP (dUTP route): step 2/2. Functionally, this enzyme is involved in nucleotide metabolism: it produces dUMP, the immediate precursor of thymidine nucleotides and it decreases the intracellular concentration of dUTP so that uracil cannot be incorporated into DNA. The polypeptide is Deoxyuridine 5'-triphosphate nucleotidohydrolase (Mycobacterium leprae (strain Br4923)).